The chain runs to 33 residues: Mu-theraphotoxin-Osp1a (33 aa).

3 disulfide bridges follow: Cys-2/Cys-17, Cys-9/Cys-22, and Cys-16/Cys-29.

It belongs to the neurotoxin 10 (Hwtx-1) family. Expressed by the venom gland.

The protein resides in the secreted. Its function is as follows. Voltage-gated sodium channel Nav1.7/SCN9A inhibitor. This Orphnaecus sp. (strain Sibaliw/Philippines) (Tarantula spider) protein is Mu-theraphotoxin-Osp1a.